A 72-amino-acid chain; its full sequence is Caerin-regulated peptide (72 aa).

Residues 1-22 (MAFLKKSLLLVLFLGLVSLSIC) form the signal peptide. Positions 23 to 43 (DEEKRENEDEEEQEDDEQSEE) are excised as a propeptide. The interval 24–46 (EEKRENEDEEEQEDDEQSEEKRG) is disordered. Over residues 30–41 (EDEEEQEDDEQS) the composition is skewed to acidic residues.

In terms of tissue distribution, expressed by the skin glands.

It localises to the secreted. Functionally, has antibacterial activity against Gram-positive bacterium M.luteus NCT C2665 and against Gram-negative bacterium E.coli K12D31. This Agalychnis callidryas (Red-eyed tree frog) protein is Caerin-regulated peptide.